The following is a 495-amino-acid chain: uncharacterized protein (495 aa).

A disordered region spans residues 337–360; the sequence is STSNRESDCSGNEDDSSNAKYAKK.

This is an uncharacterized protein from Caenorhabditis elegans.